Reading from the N-terminus, the 90-residue chain is Translation initiation factor IF-1 (90 aa).

The region spanning 15 to 90 is the S1-like domain; it reads KKQKRKKEEV…TLGRIVFRHK (76 aa).

The protein belongs to the IF-1 family. As to quaternary structure, component of the 30S ribosomal translation pre-initiation complex which assembles on the 30S ribosome in the order IF-2 and IF-3, IF-1 and N-formylmethionyl-tRNA(fMet); mRNA recruitment can occur at any time during PIC assembly.

The protein resides in the cytoplasm. In terms of biological role, one of the essential components for the initiation of protein synthesis. Stabilizes the binding of IF-2 and IF-3 on the 30S subunit to which N-formylmethionyl-tRNA(fMet) subsequently binds. Helps modulate mRNA selection, yielding the 30S pre-initiation complex (PIC). Upon addition of the 50S ribosomal subunit IF-1, IF-2 and IF-3 are released leaving the mature 70S translation initiation complex. The protein is Translation initiation factor IF-1 of Mycoplasma sp.